The chain runs to 298 residues: Bifunctional protein FolD (298 aa).

Residues 166–168 (GRS), serine 191, and isoleucine 232 contribute to the NADP(+) site.

The protein belongs to the tetrahydrofolate dehydrogenase/cyclohydrolase family. Homodimer.

The enzyme catalyses (6R)-5,10-methylene-5,6,7,8-tetrahydrofolate + NADP(+) = (6R)-5,10-methenyltetrahydrofolate + NADPH. It carries out the reaction (6R)-5,10-methenyltetrahydrofolate + H2O = (6R)-10-formyltetrahydrofolate + H(+). Its pathway is one-carbon metabolism; tetrahydrofolate interconversion. Its function is as follows. Catalyzes the oxidation of 5,10-methylenetetrahydrofolate to 5,10-methenyltetrahydrofolate and then the hydrolysis of 5,10-methenyltetrahydrofolate to 10-formyltetrahydrofolate. In Erythrobacter litoralis (strain HTCC2594), this protein is Bifunctional protein FolD.